Consider the following 263-residue polypeptide: Troponin T, fast skeletal muscle isoforms (263 aa).

The span at 1-26 (MSDTEEVEHGEEEYEEEAHEAEEVHE) shows a compositional bias: acidic residues. Disordered regions lie at residues 1 to 66 (MSDT…FDDI), 107 to 188 (RAER…VLAE), and 243 to 263 (DQAQKHSKKAGAKGKVGGRWK). Position 2 is an N-acetylserine (serine 2). 3 stretches are compositionally biased toward basic and acidic residues: residues 56 to 66 (PEGEKVDFDDI), 107 to 149 (RAER…DDLK), and 177 to 188 (TARETKKKVLAE). Residues 247–263 (KHSKKAGAKGKVGGRWK) show a composition bias toward basic residues.

It belongs to the troponin T family.

Troponin T is the tropomyosin-binding subunit of troponin, the thin filament regulatory complex which confers calcium-sensitivity to striated muscle actomyosin ATPase activity. The polypeptide is Troponin T, fast skeletal muscle isoforms (TNNT3) (Gallus gallus (Chicken)).